A 178-amino-acid chain; its full sequence is Transcription termination/antitermination protein NusG (178 aa).

The KOW domain maps to 126 to 156 (VGQQVRVNEGPFADFNGVVEEVNYERNKLRV).

It belongs to the NusG family.

Its function is as follows. Participates in transcription elongation, termination and antitermination. In Neisseria meningitidis serogroup B (strain ATCC BAA-335 / MC58), this protein is Transcription termination/antitermination protein NusG.